We begin with the raw amino-acid sequence, 153 residues long: Small ribosomal subunit protein uS19 (153 aa).

The protein belongs to the universal ribosomal protein uS19 family.

This chain is Small ribosomal subunit protein uS19 (RPS15), found in Elaeis oleifera (American oil palm).